The following is a 620-amino-acid chain: Glutathione-regulated potassium-efflux system protein KefC (620 aa).

Transmembrane regions (helical) follow at residues 4–24, 26–46, 54–74, 90–110, 114–134, 149–169, 178–198, 218–238, 270–290, 294–314, 327–347, and 359–379; these read HTLIQALIYLGSAALIVPIAV, LGLGSVLGYLIAGCIIGPWGL, SILHFAEIGVVLMLFIIGLEL, GALQMVICGGLLGLFCMLLGL, VAELIGMTLALSSTAIAMQAM, FAVLLFQDIAAIPLVAMIPLL, MGAFALSALKVAGALVLVVLL, VFSAVALFLVFGFGLLLEEVG, GLLLGLFFIGVGMSIDFGTLL, LRIVILLLGFLIIKIAMLWLI, WFAVLLGQGSEFAFVVFGAAQ, and SLTLAVALSMAATPILLVILN. Residues 399-518 form the RCK N-terminal domain; the sequence is QPRVIIAGFG…AGVEKPERET (120 aa). A disordered region spans residues 597–620; that stretch reads GWQGTEEGKHTGNMADEPETKPSS.

It belongs to the monovalent cation:proton antiporter 2 (CPA2) transporter (TC 2.A.37) family. KefC subfamily. Homodimer. Interacts with the regulatory subunit KefF.

The protein resides in the cell inner membrane. Functionally, pore-forming subunit of a potassium efflux system that confers protection against electrophiles. Catalyzes K(+)/H(+) antiport. The polypeptide is Glutathione-regulated potassium-efflux system protein KefC (Escherichia coli O6:K15:H31 (strain 536 / UPEC)).